Reading from the N-terminus, the 200-residue chain is Small ribosomal subunit protein uS4 (200 aa).

Positions 22–42 (TGKELEKRPYAPGPHGPNQRK) are disordered. The S4 RNA-binding domain occupies 92–152 (ARLDNLVYRM…EKSNNLVVVK (61 aa)).

The protein belongs to the universal ribosomal protein uS4 family. As to quaternary structure, part of the 30S ribosomal subunit. Contacts protein S5. The interaction surface between S4 and S5 is involved in control of translational fidelity.

Its function is as follows. One of the primary rRNA binding proteins, it binds directly to 16S rRNA where it nucleates assembly of the body of the 30S subunit. With S5 and S12 plays an important role in translational accuracy. This chain is Small ribosomal subunit protein uS4, found in Bacillus thuringiensis subsp. konkukian (strain 97-27).